A 261-amino-acid polypeptide reads, in one-letter code: Tryptophan synthase alpha chain (261 aa).

Active-site proton acceptor residues include Glu49 and Asp60.

Belongs to the TrpA family. As to quaternary structure, tetramer of two alpha and two beta chains.

It carries out the reaction (1S,2R)-1-C-(indol-3-yl)glycerol 3-phosphate + L-serine = D-glyceraldehyde 3-phosphate + L-tryptophan + H2O. It participates in amino-acid biosynthesis; L-tryptophan biosynthesis; L-tryptophan from chorismate: step 5/5. Its function is as follows. The alpha subunit is responsible for the aldol cleavage of indoleglycerol phosphate to indole and glyceraldehyde 3-phosphate. This is Tryptophan synthase alpha chain from Roseiflexus castenholzii (strain DSM 13941 / HLO8).